The following is a 163-amino-acid chain: Nucleotide-binding protein YajQ (163 aa).

The protein belongs to the YajQ family.

In terms of biological role, nucleotide-binding protein. The protein is Nucleotide-binding protein YajQ of Escherichia coli O81 (strain ED1a).